The chain runs to 262 residues: Protein crossbronx-like (262 aa).

The UBC core domain occupies 15–179; it reads RQGYQVLAEY…VQELALFTKK (165 aa).

The protein belongs to the ubiquitin-conjugating enzyme family. FTS subfamily.

The polypeptide is Protein crossbronx-like (Drosophila pseudoobscura pseudoobscura (Fruit fly)).